The sequence spans 255 residues: Protein NEN4 (255 aa).

An Exonuclease domain is found at 11-174; sequence VFFDLETNVP…DDVRMNLEVL (164 aa). Mg(2+) is bound by residues aspartate 14 and glutamate 16. The active-site Proton donor/acceptor is the histidine 161. A Mg(2+)-binding site is contributed by aspartate 166.

The cofactor is Mg(2+). In terms of tissue distribution, expressed in the sieve elements and phloem pole pericycle cells.

Its subcellular location is the nucleus. Probable exonuclease required for enuclation of sieve elements. The protein is Protein NEN4 of Arabidopsis thaliana (Mouse-ear cress).